We begin with the raw amino-acid sequence, 492 residues long: Probable G-protein coupled receptor Mth-like 8 (492 aa).

The first 21 residues, 1 to 21 (MAQFCILGVLLILSGTHCSWG), serve as a signal peptide directing secretion. The Extracellular portion of the chain corresponds to 22 to 218 (FHEETHYPCA…FVLGVREWTY (197 aa)). Intrachain disulfides connect Cys-30–Cys-82, Cys-84–Cys-89, Cys-93–Cys-184, and Cys-94–Cys-107. N-linked (GlcNAc...) asparagine glycosylation is found at Asn-37 and Asn-51. Asn-129, Asn-169, and Asn-192 each carry an N-linked (GlcNAc...) asparagine glycan. The helical transmembrane segment at 219-239 (AICLLIAILSMFIVLMVYLMC) threads the bilayer. Over 240–245 (SEMRNS) the chain is Cytoplasmic. Residues 246–266 (FYGVAIKAYAICMILGYALLA) form a helical membrane-spanning segment. The Extracellular portion of the chain corresponds to 267–282 (YLTLHNPANLSNAACR). The N-linked (GlcNAc...) asparagine glycan is linked to Asn-275. Residues 283 to 303 (ILPSLALMNLVLSFYILSFIA) traverse the membrane as a helical segment. The Cytoplasmic portion of the chain corresponds to 304–317 (FKLYLSFYGVVFTK). A helical transmembrane segment spans residues 318–338 (LMFWLIFTPIVLVAVGWSFFV). The Extracellular portion of the chain corresponds to 339 to 362 (GFSYYGSRLIFGGDTCWFDPRNWS). Asn-360 carries N-linked (GlcNAc...) asparagine glycosylation. The helical transmembrane segment at 363-383 (VMIYFYAPVFVACAISGFFYV) threads the bilayer. Topologically, residues 384-411 (LSQIYIRDQPDIETEKSFESIEKNRFKS) are cytoplasmic. A helical transmembrane segment spans residues 412 to 432 (FWKYFGYTAVVWVVCICSFAF). Topologically, residues 433-441 (NYYWENRSH) are extracellular. An N-linked (GlcNAc...) asparagine glycan is attached at Asn-438. Residues 442–462 (LNYAVSFCMAFHGFAALYALI) traverse the membrane as a helical segment. Topologically, residues 463–492 (GKNQQIQNFLRRIDNGEDTCENSVPLSSFG) are cytoplasmic.

The protein belongs to the G-protein coupled receptor 2 family. Mth subfamily.

The protein resides in the cell membrane. The sequence is that of Probable G-protein coupled receptor Mth-like 8 (mthl8) from Drosophila melanogaster (Fruit fly).